Reading from the N-terminus, the 715-residue chain is Phosphatidylinositol 4-phosphate 5-kinase 6 (715 aa).

The segment covering 1 to 13 (MSVAHADDADDYS) has biased composition (basic and acidic residues). The disordered stretch occupies residues 1 to 21 (MSVAHADDADDYSRPTGESYH). MORN repeat units follow at residues 32–54 (YTGQ…DGCM), 55–77 (YVGD…SGAT), 78–100 (YEGD…SGDL), 101–123 (YRGS…NGDC), 124–146 (YDGE…NENH), 147–169 (YIGQ…NGNR), 170–192 (YDGS…DGSF), and 193–214 (YVGV…STSS). The disordered stretch occupies residues 253–306 (GASEQSSSGNRTKNSERPRRRSVDGRVSNGEMELRSNGSGYLQVDDNAESTRSS). The span at 255-264 (SEQSSSGNRT) shows a compositional bias: polar residues. Over residues 265 to 276 (KNSERPRRRSVD) the composition is skewed to basic and acidic residues. Residues 321 to 711 (TISKGHKNYE…RFRDFIFRVF (391 aa)) enclose the PIPK domain. Positions 671 to 692 (YDISKKLEHAYKSMQYDPTSIS) are activation loop.

It catalyses the reaction a 1,2-diacyl-sn-glycero-3-phospho-(1D-myo-inositol 4-phosphate) + ATP = a 1,2-diacyl-sn-glycero-3-phospho-(1D-myo-inositol-4,5-bisphosphate) + ADP + H(+). The sequence is that of Phosphatidylinositol 4-phosphate 5-kinase 6 (PIP5K6) from Arabidopsis thaliana (Mouse-ear cress).